The primary structure comprises 231 residues: Large ribosomal subunit protein uL1 (231 aa).

It belongs to the universal ribosomal protein uL1 family. As to quaternary structure, part of the 50S ribosomal subunit.

Binds directly to 23S rRNA. The L1 stalk is quite mobile in the ribosome, and is involved in E site tRNA release. In terms of biological role, protein L1 is also a translational repressor protein, it controls the translation of the L11 operon by binding to its mRNA. This chain is Large ribosomal subunit protein uL1, found in Legionella pneumophila (strain Paris).